A 75-amino-acid polypeptide reads, in one-letter code: Large ribosomal subunit protein bL31 (75 aa).

It belongs to the bacterial ribosomal protein bL31 family. Type A subfamily. Part of the 50S ribosomal subunit.

In terms of biological role, binds the 23S rRNA. The chain is Large ribosomal subunit protein bL31 from Gluconobacter oxydans (strain 621H) (Gluconobacter suboxydans).